A 388-amino-acid polypeptide reads, in one-letter code: MNLHEYQAKELLKSYGLPIQEGIIAYSGDEAAAAFDKTPTDIAVIKAQVHAGGRGKAGGVKLVKTREEAKQVTDELIGKNLVTYQTDAAGQPVNFVLVAEDMYPVQTELYLGAVVDRSSRRVTFMASTEGGVEIEKVAEETPEKIFKVNIDPLVGLLPFQAREVAFKLGLEGKQINQFVKLMSGAYQAFVENDIDLLEINPLAVRENGEIVCVDGKIGIDSNALYRLPKIAALQDKSQENERELKAAEFDLNYVALEGNIGCMVNGAGLAMATMDIIKLYGGKPANFLDVGGGATKDRVVEAFKIILEDSSVEGVLINIFGGIVRCDMIAEAIIAAIKEVDVKVPVVVRLEGNNAELGAQILEESGLKLISAQGLSDAAQKIVDAVKA.

In terms of domain architecture, ATP-grasp spans 9–245 (KELLKSYGLP…KSQENERELK (237 aa)). Residues Lys-46, 53 to 55 (GRG), Glu-100, Tyr-103, and Glu-108 each bind ATP. 2 residues coordinate Mg(2+): Asn-200 and Asp-214. Substrate-binding positions include Asn-265 and 322–324 (GIV).

This sequence belongs to the succinate/malate CoA ligase beta subunit family. As to quaternary structure, heterotetramer of two alpha and two beta subunits. Mg(2+) serves as cofactor.

The enzyme catalyses succinate + ATP + CoA = succinyl-CoA + ADP + phosphate. It carries out the reaction GTP + succinate + CoA = succinyl-CoA + GDP + phosphate. Its pathway is carbohydrate metabolism; tricarboxylic acid cycle; succinate from succinyl-CoA (ligase route): step 1/1. Succinyl-CoA synthetase functions in the citric acid cycle (TCA), coupling the hydrolysis of succinyl-CoA to the synthesis of either ATP or GTP and thus represents the only step of substrate-level phosphorylation in the TCA. The beta subunit provides nucleotide specificity of the enzyme and binds the substrate succinate, while the binding sites for coenzyme A and phosphate are found in the alpha subunit. The polypeptide is Succinate--CoA ligase [ADP-forming] subunit beta (Psychrobacter cryohalolentis (strain ATCC BAA-1226 / DSM 17306 / VKM B-2378 / K5)).